The chain runs to 226 residues: 7-cyano-7-deazaguanine synthase (226 aa).

An ATP-binding site is contributed by 9 to 19 (LSGGLDSTVAT). Residues C192, C200, C203, and C206 each coordinate Zn(2+).

Belongs to the QueC family. The cofactor is Zn(2+).

The catalysed reaction is 7-carboxy-7-deazaguanine + NH4(+) + ATP = 7-cyano-7-deazaguanine + ADP + phosphate + H2O + H(+). The protein operates within purine metabolism; 7-cyano-7-deazaguanine biosynthesis. Catalyzes the ATP-dependent conversion of 7-carboxy-7-deazaguanine (CDG) to 7-cyano-7-deazaguanine (preQ(0)). The chain is 7-cyano-7-deazaguanine synthase from Methanosphaera stadtmanae (strain ATCC 43021 / DSM 3091 / JCM 11832 / MCB-3).